The primary structure comprises 247 residues: Protein lin-28 homolog B (247 aa).

The interval 1–22 (MAEGGASKGEEPEKLPGLAEDE) is disordered. The CSD domain occupies 27–100 (HGTGHCKWFN…GLESIRVTGP (74 aa)). 3 positions are modified to phosphoserine: serine 94, serine 103, and serine 108. A disordered region spans residues 96-124 (RVTGPGGSPCLGSERRPKGKTLQKRKPKG). Basic residues predominate over residues 112-123 (PKGKTLQKRKPK). 2 CCHC-type zinc fingers span residues 125–142 (DRCY…ECSL) and 147–164 (KKCH…NCPH). 8 residues coordinate Zn(2+): cysteine 127, cysteine 130, histidine 135, cysteine 140, cysteine 149, cysteine 152, histidine 157, and cysteine 162. The span at 173 to 186 (SSQGRQEAESQPCS) shows a compositional bias: polar residues. Residues 173-247 (SSQGRQEAES…GPLIQKRKKT (75 aa)) are disordered. The span at 207-219 (VKSEMAEHSDRSP) shows a compositional bias: basic and acidic residues.

Belongs to the lin-28 family.

The protein resides in the nucleus. Its subcellular location is the nucleolus. In terms of biological role, suppressor of microRNA (miRNA) biogenesis, including that of let-7 and possibly of miR107, miR-143 and miR-200c. Binds primary let-7 transcripts (pri-let-7), including pri-let-7g and pri-let-7a-1, and sequester them in the nucleolus, away from the microprocessor complex, hence preventing their processing into mature miRNA. Does not act on pri-miR21. The repression of let-7 expression is required for normal development and contributes to maintain the pluripotent state of embryonic stem cells by preventing let-7-mediated differentiation. When overexpressed, recruits ZCCHC11/TUT4 uridylyltransferase to pre-let-7 transcripts, leading to their terminal uridylation and degradation. This activity might not be relevant in vivo, as LIN28B-mediated inhibition of let-7 miRNA maturation appears to be ZCCHC11-independent. Interaction with target pre-miRNAs occurs via an 5'-GGAG-3' motif in the pre-miRNA terminal loop. Mediates MYC-induced let-7 repression. When overexpressed, may stimulate growth of carcinoma cell lines. The protein is Protein lin-28 homolog B (Lin28b) of Mus musculus (Mouse).